A 422-amino-acid chain; its full sequence is Gamma-glutamyl phosphate reductase (422 aa).

It belongs to the gamma-glutamyl phosphate reductase family.

It localises to the cytoplasm. It carries out the reaction L-glutamate 5-semialdehyde + phosphate + NADP(+) = L-glutamyl 5-phosphate + NADPH + H(+). It participates in amino-acid biosynthesis; L-proline biosynthesis; L-glutamate 5-semialdehyde from L-glutamate: step 2/2. In terms of biological role, catalyzes the NADPH-dependent reduction of L-glutamate 5-phosphate into L-glutamate 5-semialdehyde and phosphate. The product spontaneously undergoes cyclization to form 1-pyrroline-5-carboxylate. This is Gamma-glutamyl phosphate reductase from Chloroflexus aggregans (strain MD-66 / DSM 9485).